The sequence spans 386 residues: Succinate--CoA ligase [ADP-forming] subunit beta (386 aa).

An ATP-grasp domain is found at 9-244; that stretch reads KHILSRFGVS…YDEEIKEEIE (236 aa). ATP is bound by residues Lys-46, 53–55, Glu-99, Cys-102, and Glu-107; that span reads GRG. Residues Asn-199 and Asp-213 each coordinate Mg(2+). Residues Asn-264 and 320–322 each bind substrate; that span reads GIM.

It belongs to the succinate/malate CoA ligase beta subunit family. In terms of assembly, heterotetramer of two alpha and two beta subunits. The cofactor is Mg(2+).

It carries out the reaction succinate + ATP + CoA = succinyl-CoA + ADP + phosphate. It catalyses the reaction GTP + succinate + CoA = succinyl-CoA + GDP + phosphate. It participates in carbohydrate metabolism; tricarboxylic acid cycle; succinate from succinyl-CoA (ligase route): step 1/1. Its function is as follows. Succinyl-CoA synthetase functions in the citric acid cycle (TCA), coupling the hydrolysis of succinyl-CoA to the synthesis of either ATP or GTP and thus represents the only step of substrate-level phosphorylation in the TCA. The beta subunit provides nucleotide specificity of the enzyme and binds the substrate succinate, while the binding sites for coenzyme A and phosphate are found in the alpha subunit. This chain is Succinate--CoA ligase [ADP-forming] subunit beta, found in Ehrlichia canis (strain Jake).